We begin with the raw amino-acid sequence, 506 residues long: Probable Xaa-Pro aminopeptidase PAAG_05466 (506 aa).

The Mn(2+) site is built by aspartate 285, aspartate 296, glutamate 433, and glutamate 471.

This sequence belongs to the peptidase M24B family. Requires Mn(2+) as cofactor.

It carries out the reaction Release of any N-terminal amino acid, including proline, that is linked to proline, even from a dipeptide or tripeptide.. Its function is as follows. Catalyzes the removal of a penultimate prolyl residue from the N-termini of peptides. The protein is Probable Xaa-Pro aminopeptidase PAAG_05466 of Paracoccidioides lutzii (strain ATCC MYA-826 / Pb01) (Paracoccidioides brasiliensis).